A 525-amino-acid chain; its full sequence is Exoglucanase 1 (525 aa).

The first 18 residues, 1 to 18, serve as a signal peptide directing secretion; it reads MRTAKFATLAALVASAAA. The interval 19–467 is catalytic; that stretch reads QQACSLTTER…AGNGGNNGGN (449 aa). Glutamate 231 functions as the Nucleophile in the catalytic mechanism. Glutamate 236 functions as the Proton donor in the catalytic mechanism. Residue asparagine 289 is glycosylated (N-linked (GlcNAc...) asparagine). Residues 454–492 are disordered; the sequence is GLPGAGNGGNNGGNPPPPTTTTSSAPATTTTASAGPKAG. The span at 456-465 shows a compositional bias: gly residues; that stretch reads PGAGNGGNNG. The segment at 468 to 489 is linker; it reads PPPPTTTTSSAPATTTTASAGP. Positions 473 to 489 are enriched in low complexity; that stretch reads TTTSSAPATTTTASAGP. Residues 489-525 enclose the CBM1 domain; it reads PKAGRWQQCGGIGFTGPTQCEEPYICTKLNDWYSQCL. Cystine bridges form between cysteine 497–cysteine 514 and cysteine 508–cysteine 524.

The protein belongs to the glycosyl hydrolase 7 (cellulase C) family.

The catalysed reaction is Hydrolysis of (1-&gt;4)-beta-D-glucosidic linkages in cellulose and cellotetraose, releasing cellobiose from the non-reducing ends of the chains.. Functionally, the biological conversion of cellulose to glucose generally requires three types of hydrolytic enzymes: (1) Endoglucanases which cut internal beta-1,4-glucosidic bonds; (2) Exocellobiohydrolases that cut the disaccharide cellobiose from the non-reducing end of the cellulose polymer chain; (3) Beta-1,4-glucosidases which hydrolyze the cellobiose and other short cello-oligosaccharides to glucose. The polypeptide is Exoglucanase 1 (CBH-1) (Humicola insolens (Soft-rot fungus)).